We begin with the raw amino-acid sequence, 177 residues long: ATP synthase subunit b (177 aa).

A helical transmembrane segment spans residues 16 to 36 (HLLLANMIVTIVVFLLLLILL).

This sequence belongs to the ATPase B chain family. F-type ATPases have 2 components, F(1) - the catalytic core - and F(0) - the membrane proton channel. F(1) has five subunits: alpha(3), beta(3), gamma(1), delta(1), epsilon(1). F(0) has three main subunits: a(1), b(2) and c(10-14). The alpha and beta chains form an alternating ring which encloses part of the gamma chain. F(1) is attached to F(0) by a central stalk formed by the gamma and epsilon chains, while a peripheral stalk is formed by the delta and b chains.

Its subcellular location is the cell membrane. Its function is as follows. F(1)F(0) ATP synthase produces ATP from ADP in the presence of a proton or sodium gradient. F-type ATPases consist of two structural domains, F(1) containing the extramembraneous catalytic core and F(0) containing the membrane proton channel, linked together by a central stalk and a peripheral stalk. During catalysis, ATP synthesis in the catalytic domain of F(1) is coupled via a rotary mechanism of the central stalk subunits to proton translocation. Component of the F(0) channel, it forms part of the peripheral stalk, linking F(1) to F(0). The sequence is that of ATP synthase subunit b from Exiguobacterium sibiricum (strain DSM 17290 / CCUG 55495 / CIP 109462 / JCM 13490 / 255-15).